A 146-amino-acid polypeptide reads, in one-letter code: VHMTDAEKKLVTTMWGKLDVDAAGAETLGRVLVVYPWTQRFFGHFGDLSSACAVMDNPKVQAHGKKVLHSLGDGLNHLDDLKHFYAALSELHCDKLHVDPENFRLLGNVLVCVMSRHFGAEFTPQVQAAYQKVVAGVANALAHKYH.

At Val1 the chain carries N-acetylvaline. Positions 2-146 constitute a Globin domain; that stretch reads HMTDAEKKLV…VANALAHKYH (145 aa). The residue at position 12 (Thr12) is a Phosphothreonine. At Lys59 the chain carries N6-acetyllysine. His63 is a heme b binding site. Residue Lys82 is modified to N6-acetyllysine. Residue His92 coordinates heme b. An S-nitrosocysteine modification is found at Cys93. Lys144 carries the N6-acetyllysine modification.

It belongs to the globin family. In terms of assembly, tetramer of two alpha and two different beta chains. Two external cysteine residues at beta-16 and beta-52 cause reversible polymerization to octamers and most likely irreversible formation of higher polymers. As to expression, red blood cells.

Involved in oxygen transport from the lung to the various peripheral tissues. This is Hemoglobin subunit beta (HBB) from Echinops telfairi (Lesser hedgehog tenrec).